The chain runs to 767 residues: Golgin subfamily A member 1 (767 aa).

Residues 13–58 (TAVAQRPGGATRIPRSVSKESVASMGADSGDDFASDGSSSREDLSS) form a disordered region. Phosphoserine is present on residues S30, S36, S41, S47, S50, and S51. Residues 50-657 (SSSREDLSSQ…RKTLQKELKI (608 aa)) are a coiled coil. The GRIP domain maps to 688-737 (TDAREINFEYLKHVVLKFMSCRESEAFHLIKAVSVLLNFSQEEENMLKET). A disordered region spans residues 748 to 767 (KPAPKGSIRPSISNPRIPWS).

In terms of assembly, interacts with RAB6A. Directly interacts with TBC1D23. Interacts with FAM91A1; this interaction may be mediated by TBC1D23. Interacts with ARL1; this interaction recruits Golgin-97/GOLGA1 onto the Golgi apparatus. In terms of processing, MARylated by PARP12; MARylation is required for basolateral export of E-Cadherin.

The protein resides in the golgi apparatus membrane. It localises to the golgi apparatus. The protein localises to the trans-Golgi network membrane. It is found in the cytoplasmic vesicle. Its subcellular location is the secretory vesicle. The protein resides in the acrosome. In terms of biological role, involved in vesicular trafficking at the Golgi apparatus level. Involved in endosome-to-Golgi trafficking. Mechanistically, captures transport vesicles arriving from endosomes via the protein TBC1D23. Recognized vesicles are then tethered to the trans-Golgi before subsequent SNARE engagement and vesicle fusion. Selectively regulates E-cadherin transport from the trans-Golgi network in tubulovesicular carriers. Functionally, (Microbial infection) Plays an important role in poxvirus morphogenesis. Translocates into the viral factories where it may transport the membrane fragments and associated protein factors important for virus maturation to the sites of virion assembly. In Homo sapiens (Human), this protein is Golgin subfamily A member 1 (GOLGA1).